The sequence spans 130 residues: Ribonuclease P protein component 2 (130 aa).

The protein belongs to the eukaryotic/archaeal RNase P protein component 2 family. As to quaternary structure, consists of a catalytic RNA component and at least 4-5 protein subunits.

The protein resides in the cytoplasm. It carries out the reaction Endonucleolytic cleavage of RNA, removing 5'-extranucleotides from tRNA precursor.. Part of ribonuclease P, a protein complex that generates mature tRNA molecules by cleaving their 5'-ends. The chain is Ribonuclease P protein component 2 from Methanococcus vannielii (strain ATCC 35089 / DSM 1224 / JCM 13029 / OCM 148 / SB).